The chain runs to 306 residues: Probable zinc metalloprotease VDBG_06923 (306 aa).

An N-terminal signal peptide occupies residues 1–28 (MNYEAEQPGANDDASGVAVALELARVLA). Zn(2+)-binding residues include D12 and E45. N60 is a glycosylation site (N-linked (GlcNAc...) asparagine). D72 lines the Zn(2+) pocket. Positions 218-306 (APAKVNNVRV…KSPVTIPFPT (89 aa)) constitute a Fibronectin type-III domain. Residues N228, N234, and N244 are each glycosylated (N-linked (GlcNAc...) asparagine).

This sequence belongs to the peptidase M28 family. M28B subfamily. It depends on Zn(2+) as a cofactor.

Its subcellular location is the secreted. In Verticillium alfalfae (strain VaMs.102 / ATCC MYA-4576 / FGSC 10136) (Verticillium wilt of alfalfa), this protein is Probable zinc metalloprotease VDBG_06923.